A 128-amino-acid polypeptide reads, in one-letter code: Head peptide (128 aa).

Residues 1–22 (MWKFASIVVLVVCLAWAVYCED) form the signal peptide. Gln-23 carries the post-translational modification Pyrrolidone carboxylic acid. At Pro-26 the chain carries Hydroxyproline; partial. Residues 27 to 128 (SLKTRFGRSA…GRANKKRAAN (102 aa)) form a disordered region. Phenylalanine amide is present on Phe-32. The propeptide occupies 35–55 (SADEPESDNYVSNDIMEKRSA). At Gln-56 the chain carries Pyrrolidone carboxylic acid. Position 59 is a hydroxyproline; partial (Pro-59). Phe-65 carries the post-translational modification Phenylalanine amide. A compositionally biased stretch (basic and acidic residues) spans 66 to 78 (GRSEGAEVMEKRS). The propeptide occupies 68-79 (SEGAEVMEKRSA). Gln-80 is modified (pyrrolidone carboxylic acid). Pro-83 carries the hydroxyproline; partial modification. Phenylalanine amide is present on Phe-89. The propeptide occupies 92 to 128 (SVANPESDGYMRKRSAESEPFVTRIRHGRANKKRAAN). Positions 115-128 (RIRHGRANKKRAAN) are enriched in basic residues.

The protein belongs to the NPY family. In terms of tissue distribution, expressed in the brain, terminal ganglion, and midgut of adults: numerous neurosecretory cells and midgut endocrine cells. Expression is dynamic depending on reproductive cycle.

It is found in the secreted. Functionally, has a role in inhibiting host-seeking behavior during a reproductive cycle. This chain is Head peptide, found in Aedes aegypti (Yellowfever mosquito).